We begin with the raw amino-acid sequence, 199 residues long: Nuclear transcription factor Y subunit C-2 (199 aa).

This sequence belongs to the NFYC/HAP5 subunit family. In terms of assembly, heterotrimeric transcription factor composed of three components, NF-YA, NF-YB and NF-YC. NF-YB and NF-YC must interact and dimerize for NF-YA association and DNA binding. Interacts with HTT1 in both cytoplasm and nucleus. In terms of tissue distribution, ubiquitous.

It is found in the nucleus. The protein localises to the cytoplasm. Functionally, stimulates the transcription of various genes by recognizing and binding to a CCAAT motif in promoters. This is Nuclear transcription factor Y subunit C-2 (NFYC2) from Arabidopsis thaliana (Mouse-ear cress).